The sequence spans 604 residues: Prostaglandin G/H synthase 2 (604 aa).

The signal sequence occupies residues 1 to 17 (MLARALLLCAAVALSGA). An EGF-like domain is found at 18 to 55 (ANPCCSHPCQNRGVCMSVGFDQYKCDCTRTGFYGENCT). Intrachain disulfides connect cysteine 21/cysteine 32, cysteine 22/cysteine 145, cysteine 26/cysteine 42, and cysteine 44/cysteine 54. A glycan (N-linked (GlcNAc...) asparagine) is linked at asparagine 53. Arginine 106 serves as a coordination point for substrate. An N-linked (GlcNAc...) asparagine glycan is attached at asparagine 130. Histidine 193 functions as the Proton acceptor in the catalytic mechanism. Tyrosine 341 contacts substrate. Residue tyrosine 371 is the For cyclooxygenase activity of the active site. Position 374 (histidine 374) interacts with heme b. Residue asparagine 396 is glycosylated (N-linked (GlcNAc...) asparagine). At cysteine 526 the chain carries S-nitrosocysteine. Cysteines 555 and 561 form a disulfide. Residue serine 565 is modified to O-acetylserine. An N-linked (GlcNAc...) asparagine glycan is attached at asparagine 580.

This sequence belongs to the prostaglandin G/H synthase family. In terms of assembly, homodimer. The cofactor is heme b. In terms of processing, S-nitrosylation by NOS2 (iNOS) activates enzyme activity. S-nitrosylation may take place on different Cys residues in addition to Cys-526. Post-translationally, acetylated at Ser-565 by SPHK1. During neuroinflammation, acetylation by SPHK1 promotes neuronal secretion of specialized preresolving mediators (SPMs), especially 15-R-lipoxin A4, which results in an increase of phagocytic microglia.

The protein resides in the microsome membrane. It is found in the endoplasmic reticulum membrane. The protein localises to the nucleus inner membrane. It localises to the nucleus outer membrane. The catalysed reaction is (5Z,8Z,11Z,14Z)-eicosatetraenoate + AH2 + 2 O2 = prostaglandin H2 + A + H2O. The enzyme catalyses (5Z,8Z,11Z,14Z)-eicosatetraenoate + 2 O2 = prostaglandin G2. It catalyses the reaction prostaglandin G2 + AH2 = prostaglandin H2 + A + H2O. It carries out the reaction (5Z,8Z,11Z,14Z,17Z)-eicosapentaenoate + 2 O2 = prostaglandin G3. The catalysed reaction is prostaglandin G3 + AH2 = prostaglandin H3 + A + H2O. The enzyme catalyses (8Z,11Z,14Z)-eicosatrienoate + 2 O2 = prostaglandin G1. It catalyses the reaction prostaglandin G1 + AH2 = prostaglandin H1 + A + H2O. It carries out the reaction 2-(5Z,8Z,11Z,14Z)-eicosatetraenoyl-sn-glycero-3-phosphoethanolamine + 2 O2 = 2-(prostaglandin G2)-sn-glycero-3-phosphoethanolamine. The catalysed reaction is 2-(prostaglandin G2)-sn-glycero-3-phosphoethanolamine + AH2 = 2-(prostaglandin H2)-sn-glycero-3-phosphoethanolamine + A + H2O. The enzyme catalyses 2-(5Z,8Z,11Z,14Z)-eicosatetraenoyl-sn-glycero-3-phosphocholine + 2 O2 = 2-(prostaglandin G2)-sn-glycero-3-phosphocholine. It catalyses the reaction 2-(prostaglandin G2)-sn-glycero-3-phosphocholine + AH2 = 2-(prostaglandin H2)-sn-glycero-3-phosphocholine + A + H2O. It carries out the reaction (15S)-hydroperoxy-(5Z,8Z,11Z,13E)-eicosatetraenoate + AH2 = (15S)-hydroxy-(5Z,8Z,11Z,13E)-eicosatetraenoate + A + H2O. The catalysed reaction is 2-(5Z,8Z,11Z,14Z)-eicosatetraenoyl-sn-glycero-3-phosphocholine + AH2 + O2 = 2-[(15S)-hydroxy-(5Z,8Z,11Z,13E)-eicosatetraenoyl]-sn-glycero-3-phosphocholine + A + H2O. The enzyme catalyses 2-(5Z,8Z,11Z,14Z)-eicosatetraenoyl-sn-glycero-3-phosphocholine + AH2 + O2 = 2-[(15R)-hydroxy-(5Z,8Z,11Z,13E)-eicosatetraenoyl]-sn-glycero-3-phosphocholine + A + H2O. It catalyses the reaction 2-(5Z,8Z,11Z,14Z)-eicosatetraenoyl-sn-glycero-3-phosphocholine + AH2 + O2 = 2-[(11R)-hydroxy-(5Z,8Z,12E,14Z)-eicosatetraenoyl]-sn-glycero-3-phosphocholine + A + H2O. It carries out the reaction (9Z,12Z)-octadecadienoate + AH2 + O2 = 9-hydroxy-(10E,12Z)-octadecadienoate + A + H2O. The catalysed reaction is (9Z,12Z)-octadecadienoate + AH2 + O2 = 13-hydroxy-(9Z,11E)-octadecadienoate + A + H2O. The enzyme catalyses (5Z,8Z,11Z,14Z)-eicosatetraenoate + AH2 + O2 = (15R)-hydroxy-(5Z,8Z,11Z,13E)-eicosatetraenoate + A + H2O. It catalyses the reaction (5Z,8Z,11Z,14Z)-eicosatetraenoate + AH2 + O2 = (11R)-hydroxy-(5Z,8Z,12E,14Z)-eicosatetraenoate + A + H2O. It carries out the reaction (5Z,8Z,11Z,14Z,17Z)-eicosapentaenoate + AH2 + O2 = (11R)-hydroxy-(5Z,8Z,12E,14Z,17Z)-eicosapentaenoate + A + H2O. The catalysed reaction is (5Z,8Z,11Z,14Z,17Z)-eicosapentaenoate + AH2 + O2 = (18S)-hydroxy-(5Z,8Z,11Z,14Z,16E)-eicosapentaenoate + A + H2O. The enzyme catalyses (5Z,8Z,11Z,14Z,17Z)-eicosapentaenoate + AH2 + O2 = (18R)-hydroxy-(5Z,8Z,11Z,14Z,16E)-eicosapentaenoate + A + H2O. It catalyses the reaction (5Z,8Z,11Z,14Z,17Z)-eicosapentaenoate + AH2 + O2 = (15R)-hydroxy-(5Z,8Z,11Z,13E,17Z)-eicosapentaenoate + A + H2O. It carries out the reaction (5Z,8Z,11Z,14Z,17Z)-eicosapentaenoate + AH2 + O2 = (15S)-hydroxy-(5Z,8Z,11Z,13E,17Z)-eicosapentaenoate + A + H2O. The catalysed reaction is (7Z,10Z,13Z,16Z,19Z)-docosapentaenoate + AH2 + O2 = 13R-hydroxy-(7Z,10Z,14E,16Z,19Z)-docosapentaenoate + A + H2O. The enzyme catalyses (4Z,7Z,10Z,13Z,16Z,19Z)-docosahexaenoate + AH2 + O2 = 13-hydroxy-(4Z,7Z,10Z,14E,16Z,19Z)-docosahexaenoate + A + H2O. It catalyses the reaction (5S)-hydroxy-(6E,8Z,11Z,14Z)-eicosatetraenoate + AH2 + O2 = (5S,15R)-dihydroxy-(6E,8Z,11Z,13E)-eicosatetraenoate + A + H2O. It carries out the reaction (4Z,7Z,10Z,13Z,16Z,19Z)-docosahexaenoate + AH2 + O2 = 17R-hydroxy-(4Z,7Z,10Z,13Z,15E,19Z)-docosahexaenoate + A + H2O. The catalysed reaction is (5S)-hydroxy-(6E,8Z,11Z,14Z)-eicosatetraenoate + AH2 + O2 = (5S,15S)-dihydroxy-(6E,8Z,11Z,13E)-eicosatetraenoate + A + H2O. The enzyme catalyses (5S)-hydroxy-(6E,8Z,11Z,14Z)-eicosatetraenoate + AH2 + O2 = (5S,11R)-dihydroxy-(6E,8Z,12E,14Z)-eicosatetraenoate + A + H2O. It catalyses the reaction 2-(5Z,8Z,11Z,14Z-eicosatetraenoyl)-glycerol + 2 O2 = 2-glyceryl-prostaglandin G2. It carries out the reaction 2-glyceryl-prostaglandin G2 + AH2 = 2-glyceryl-prostaglandin H2 + A + H2O. The catalysed reaction is (5Z,8Z,11Z,14Z)-eicosatetraenoate + O2 = (15R)-hydroperoxy-(5Z,8Z,11Z,13E)-eicosatetraenoate. The enzyme catalyses (5Z,8Z,11Z,14Z)-eicosatetraenoate + O2 = 11R-hydroperoxy-(5Z,8Z,12E,14Z)-eicosatetraenoate. It catalyses the reaction (9Z,12Z)-octadecadienoate + AH2 + O2 = (9R)-hydroxy-(10E,12Z)-octadecadienoate + A + H2O. It carries out the reaction (9Z,12Z)-octadecadienoate + AH2 + O2 = (9S)-hydroxy-(10E,12Z)-octadecadienoate + A + H2O. The catalysed reaction is (9Z,12Z)-octadecadienoate + AH2 + O2 = (13S)-hydroxy-(9Z,11E)-octadecadienoate + A + H2O. The enzyme catalyses (9Z,12Z)-octadecadienoate + AH2 + O2 = (13R)-hydroxy-(9Z,11E)-octadecadienoate + A + H2O. It participates in lipid metabolism; prostaglandin biosynthesis. Dual cyclooxygenase and peroxidase in the biosynthesis pathway of prostanoids, a class of C20 oxylipins mainly derived from arachidonate ((5Z,8Z,11Z,14Z)-eicosatetraenoate, AA, C20:4(n-6)), with a particular role in the inflammatory response. The cyclooxygenase activity oxygenates AA to the hydroperoxy endoperoxide prostaglandin G2 (PGG2), and the peroxidase activity reduces PGG2 to the hydroxy endoperoxide prostaglandin H2 (PGH2), the precursor of all 2-series prostaglandins and thromboxanes. This complex transformation is initiated by abstraction of hydrogen at carbon 13 (with S-stereochemistry), followed by insertion of molecular O2 to form the endoperoxide bridge between carbon 9 and 11 that defines prostaglandins. The insertion of a second molecule of O2 (bis-oxygenase activity) yields a hydroperoxy group in PGG2 that is then reduced to PGH2 by two electrons. Similarly catalyzes successive cyclooxygenation and peroxidation of dihomo-gamma-linoleate (DGLA, C20:3(n-6)) and eicosapentaenoate (EPA, C20:5(n-3)) to corresponding PGH1 and PGH3, the precursors of 1- and 3-series prostaglandins. In an alternative pathway of prostanoid biosynthesis, converts 2-arachidonoyl lysophopholipids to prostanoid lysophopholipids, which are then hydrolyzed by intracellular phospholipases to release free prostanoids. Metabolizes 2-arachidonoyl glycerol yielding the glyceryl ester of PGH2, a process that can contribute to pain response. Generates lipid mediators from n-3 and n-6 polyunsaturated fatty acids (PUFAs) via a lipoxygenase-type mechanism. Oxygenates PUFAs to hydroperoxy compounds and then reduces them to corresponding alcohols. Plays a role in the generation of resolution phase interaction products (resolvins) during both sterile and infectious inflammation. Metabolizes docosahexaenoate (DHA, C22:6(n-3)) to 17R-HDHA, a precursor of the D-series resolvins (RvDs). As a component of the biosynthetic pathway of E-series resolvins (RvEs), converts eicosapentaenoate (EPA, C20:5(n-3)) primarily to 18S-HEPE that is further metabolized by ALOX5 and LTA4H to generate 18S-RvE1 and 18S-RvE2. In vascular endothelial cells, converts docosapentaenoate (DPA, C22:5(n-3)) to 13R-HDPA, a precursor for 13-series resolvins (RvTs) shown to activate macrophage phagocytosis during bacterial infection. In activated leukocytes, contributes to oxygenation of hydroxyeicosatetraenoates (HETE) to diHETES (5,15-diHETE and 5,11-diHETE). Can also use linoleate (LA, (9Z,12Z)-octadecadienoate, C18:2(n-6)) as substrate and produce hydroxyoctadecadienoates (HODEs) in a regio- and stereospecific manner, being (9R)-HODE ((9R)-hydroxy-(10E,12Z)-octadecadienoate) and (13S)-HODE ((13S)-hydroxy-(9Z,11E)-octadecadienoate) its major products. During neuroinflammation, plays a role in neuronal secretion of specialized preresolving mediators (SPMs) 15R-lipoxin A4 that regulates phagocytic microglia. This is Prostaglandin G/H synthase 2 (PTGS2) from Bos taurus (Bovine).